The following is a 198-amino-acid chain: Nucleoid occlusion factor SlmA (198 aa).

One can recognise an HTH tetR-type domain in the interval 10–70; that stretch reads NRREEILQSL…SLIEFIEDSL (61 aa). Residues 33 to 52 constitute a DNA-binding region (H-T-H motif); the sequence is TTAKLAASVGVSEAALYRHF. Residues 117–145 are a coiled coil; it reads EQDKLQGRINQLFERIEAQLRQVLREKKM.

This sequence belongs to the nucleoid occlusion factor SlmA family. Homodimer. Interacts with FtsZ.

It localises to the cytoplasm. Its subcellular location is the nucleoid. In terms of biological role, required for nucleoid occlusion (NO) phenomenon, which prevents Z-ring formation and cell division over the nucleoid. Acts as a DNA-associated cell division inhibitor that binds simultaneously chromosomal DNA and FtsZ, and disrupts the assembly of FtsZ polymers. SlmA-DNA-binding sequences (SBS) are dispersed on non-Ter regions of the chromosome, preventing FtsZ polymerization at these regions. The chain is Nucleoid occlusion factor SlmA from Enterobacter sp. (strain 638).